Here is an 822-residue protein sequence, read N- to C-terminus: MSSWIRWHGPAMARLWGFCWLVVGFWRAAFACPTSCKCSASRIWCSDPSPGIVAFPRLEPNSVDPENITEIFIANQKRLEIINEDDVEAYVGLRNLTIVDSGLKFVAHKAFLKNSNLQHINFTRNKLTSLSRKHFRHLDLSELILVGNPFTCSCDIMWIKTLQEAKSSPDTQDLYCLNESSKNIPLANLQIPNCGLPSANLAAPNLTVEEGKSITLSCSVAGDPVPNMYWDVGNLVSKHMNETSHTQGSLRITNISSDDSGKQISCVAENLVGEDQDSVNLTVHFAPTITFLESPTSDHHWCIPFTVKGNPKPALQWFYNGAILNESKYICTKIHVTNHTEYHGCLQLDNPTHMNNGDYTLIAKNEYGKDEKQISAHFMGWPGIDDGANPNYPDVIYEDYGTAANDIGDTTNRSNEIPSTDVTDKTGREHLSVYAVVVIASVVGFCLLVMLFLLKLARHSKFGMKGPASVISNDDDSASPLHHISNGSNTPSSSEGGPDAVIIGMTKIPVIENPQYFGITNSQLKPDTFVQHIKRHNIVLKRELGEGAFGKVFLAECYNLCPEQDKILVAVKTLKDASDNARKDFHREAELLTNLQHEHIVKFYGVCVEGDPLIMVFEYMKHGDLNKFLRAHGPDAVLMAEGNPPTELTQSQMLHIAQQIAAGMVYLASQHFVHRDLATRNCLVGENLLVKIGDFGMSRDVYSTDYYRVGGHTMLPIRWMPPESIMYRKFTTESDVWSLGVVLWEIFTYGKQPWYQLSNNEVIECITQGRVLQRPRTCPQEVYELMLGCWQREPHMRKNIKGIHTLLQNLAKASPVYLDILG.

An N-terminal signal peptide occupies residues 1-31 (MSSWIRWHGPAMARLWGFCWLVVGFWRAAFA). Disulfide bonds link cysteine 32–cysteine 38 and cysteine 36–cysteine 45. The LRRNT domain occupies 32 to 61 (CPTSCKCSASRIWCSDPSPGIVAFPRLEPN). At 32–430 (CPTSCKCSAS…DVTDKTGREH (399 aa)) the chain is on the extracellular side. 3 N-linked (GlcNAc...) asparagine glycosylation sites follow: asparagine 67, asparagine 95, and asparagine 121. LRR repeat units follow at residues 92–113 (GLRN…AFLK) and 116–137 (NLQH…HFRH). The LRRCT domain maps to 148–196 (NPFTCSCDIMWIKTLQEAKSSPDTQDLYCLNESSKNIPLANLQIPNCGL). 2 disulfides stabilise this stretch: cysteine 152/cysteine 176 and cysteine 154/cysteine 194. Asparagine 178, asparagine 205, asparagine 241, asparagine 254, asparagine 280, asparagine 325, asparagine 338, and asparagine 412 each carry an N-linked (GlcNAc...) asparagine glycan. 2 Ig-like C2-type domains span residues 197–282 (PSAN…VNLT) and 295–365 (PTSD…IAKN). Cysteine 218 and cysteine 266 are oxidised to a cystine. A disulfide bridge links cysteine 302 with cysteine 345. The helical transmembrane segment at 431-454 (LSVYAVVVIASVVGFCLLVMLFLL) threads the bilayer. Residues 455-466 (KLARHSKFGMKG) are interaction with MAPK8IP3/JIP3. Topologically, residues 455–822 (KLARHSKFGM…ASPVYLDILG (368 aa)) are cytoplasmic. The segment at 475–498 (DDSASPLHHISNGSNTPSSSEGGP) is disordered. The span at 485 to 495 (SNGSNTPSSSE) shows a compositional bias: polar residues. Position 516 is a phosphotyrosine; by autocatalysis (tyrosine 516). The Protein kinase domain occupies 538 to 807 (IVLKRELGEG…KNIKGIHTLL (270 aa)). ATP-binding positions include 544 to 552 (LGEGAFGKV) and lysine 572. The active-site Proton acceptor is the aspartate 676. A phosphotyrosine; by autocatalysis mark is found at tyrosine 702, tyrosine 706, tyrosine 707, and tyrosine 817.

The protein belongs to the protein kinase superfamily. Tyr protein kinase family. Insulin receptor subfamily. As to quaternary structure, exists in a dynamic equilibrium between monomeric (low affinity) and dimeric (high affinity) structures. Interacts (phosphorylated upon activation by BDNF) with SHC1; mediates SHC1 phosphorylation and activation. Interacts (phosphorylated upon activation by BDNF) with PLCG1 and/or PLCG2; mediates PLCG1 phosphorylation and activation. Interacts with SH2B1 and SH2B2. Interacts with NGFR; may regulate the ligand specificity of the receptor. Interacts with SORCS2; this interaction is important for normal targeting to post-synaptic densities in response to high-frequency stimulation. Interacts (phosphorylated upon ligand-binding) with SH2D1A; regulates NTRK2. Interacts with SQSTM1 and KIDINS220. Interacts (phosphorylated upon ligand-binding) with FRS2; activates the MAPK signaling pathway. Interacts with APPL1. Interacts with MAPK8IP3/JIP3 and KLC1; interaction with KLC1 is mediated by MAPK8IP3/JIP3. Interacts with SORL1; this interaction facilitates NTRK2 trafficking between synaptic plasma membranes, postsynaptic densities and cell soma, hence positively regulates BDNF signaling. Interacts with SLITRK2. Phosphorylated. Undergoes ligand-mediated autophosphorylation that is required for interaction with SHC1 and PLCG1 and other downstream effectors. Isoform TrkB-T-Shc is not phosphorylated. In terms of processing, ubiquitinated. Undergoes polyubiquitination upon activation; regulated by NGFR. Ubiquitination regulates the internalization of the receptor. Isoform TrkB is expressed in the central and peripheral nervous system. In the central nervous system (CNS), expression is observed in the cerebral cortex, hippocampus, thalamus, choroid plexus, granular layer of the cerebellum, brain stem, and spinal cord. In the peripheral nervous system, it is expressed in many cranial ganglia, the ophthalmic nerve, the vestibular system, multiple facial structures, the submaxillary glands, and dorsal root ganglia. Isoform TrkB-T1 is mainly expressed in the brain but also detected in other tissues including pancreas, kidney and heart. Isoform TrkB-T-Shc is predominantly expressed in the brain.

It localises to the cell membrane. The protein resides in the endosome membrane. Its subcellular location is the early endosome membrane. It is found in the cell projection. The protein localises to the axon. It localises to the dendrite. The protein resides in the cytoplasm. Its subcellular location is the perinuclear region. It is found in the postsynaptic density. It carries out the reaction L-tyrosyl-[protein] + ATP = O-phospho-L-tyrosyl-[protein] + ADP + H(+). Its activity is regulated as follows. The neuronal activity and the influx of calcium positively regulate the kinase activity and the internalization of the receptor which are both important for active signaling. Regulated by NGFR that may control the internalization of the receptor. NGFR may also stimulate the activation by BDNF compared to NTF3 and NTF4. SH2D1A inhibits the autophosphorylation of the receptor, and alters the recruitment and activation of downstream effectors and signaling cascades. The formation of active receptors dimers able to fully transduce the ligand-mediated signal, may be negatively regulated by the formation of inactive heterodimers with the non-catalytic isoforms. Its function is as follows. Receptor tyrosine kinase involved in the development and the maturation of the central and the peripheral nervous systems through regulation of neuron survival, proliferation, migration, differentiation, and synapse formation and plasticity. Receptor for BDNF/brain-derived neurotrophic factor and NTF4/neurotrophin-4. Alternatively can also bind NTF3/neurotrophin-3 which is less efficient in activating the receptor but regulates neuron survival through NTRK2. Upon ligand-binding, undergoes homodimerization, autophosphorylation and activation. Recruits, phosphorylates and/or activates several downstream effectors including SHC1, FRS2, SH2B1, SH2B2 and PLCG1 that regulate distinct overlapping signaling cascades. Through SHC1, FRS2, SH2B1, SH2B2 activates the GRB2-Ras-MAPK cascade that regulates for instance neuronal differentiation including neurite outgrowth. Through the same effectors controls the Ras-PI3 kinase-AKT1 signaling cascade that mainly regulates growth and survival. Through PLCG1 and the downstream protein kinase C-regulated pathways controls synaptic plasticity. Thereby, plays a role in learning and memory by regulating both short term synaptic function and long-term potentiation. PLCG1 also leads to NF-Kappa-B activation and the transcription of genes involved in cell survival. Hence, it is able to suppress anoikis, the apoptosis resulting from loss of cell-matrix interactions. May also play a role in neutrophin-dependent calcium signaling in glial cells and mediate communication between neurons and glia. The protein is BDNF/NT-3 growth factors receptor (NTRK2) of Homo sapiens (Human).